A 486-amino-acid polypeptide reads, in one-letter code: uncharacterized protein (486 aa).

ABC transporter domains are found at residues 2–241 and 249–486; these read VEFK…KVFV and FEKD…LLFL. Residue 36-43 coordinates ATP; it reads GKNGEGKS.

This sequence belongs to the ABC transporter superfamily.

This is an uncharacterized protein from Borreliella burgdorferi (strain ATCC 35210 / DSM 4680 / CIP 102532 / B31) (Borrelia burgdorferi).